The sequence spans 94 residues: Integration host factor subunit beta (94 aa).

It belongs to the bacterial histone-like protein family. In terms of assembly, heterodimer of an alpha and a beta chain.

This protein is one of the two subunits of integration host factor, a specific DNA-binding protein that functions in genetic recombination as well as in transcriptional and translational control. The sequence is that of Integration host factor subunit beta from Escherichia fergusonii (strain ATCC 35469 / DSM 13698 / CCUG 18766 / IAM 14443 / JCM 21226 / LMG 7866 / NBRC 102419 / NCTC 12128 / CDC 0568-73).